Consider the following 31-residue polypeptide: Photosystem I reaction center subunit XII (31 aa).

A helical membrane pass occupies residues 7–26 (QIYIALLTALIPAFFALKLG).

The protein belongs to the PsaM family.

Its subcellular location is the plastid. The protein localises to the chloroplast thylakoid membrane. The chain is Photosystem I reaction center subunit XII from Euglena mutabilis.